The primary structure comprises 270 residues: Putative phosphoenolpyruvate synthase regulatory protein (270 aa).

Glycine 150 to threonine 157 contacts ADP.

This sequence belongs to the pyruvate, phosphate/water dikinase regulatory protein family. PSRP subfamily.

The enzyme catalyses [pyruvate, water dikinase] + ADP = [pyruvate, water dikinase]-phosphate + AMP + H(+). The catalysed reaction is [pyruvate, water dikinase]-phosphate + phosphate + H(+) = [pyruvate, water dikinase] + diphosphate. In terms of biological role, bifunctional serine/threonine kinase and phosphorylase involved in the regulation of the phosphoenolpyruvate synthase (PEPS) by catalyzing its phosphorylation/dephosphorylation. This is Putative phosphoenolpyruvate synthase regulatory protein from Shewanella piezotolerans (strain WP3 / JCM 13877).